Reading from the N-terminus, the 1051-residue chain is Putative transcription factor SEF1 (1051 aa).

The segment covering 1-10 has biased composition (basic and acidic residues); the sequence is MSTDVSERGA. Disordered stretches follow at residues 1–54 and 67–90; these read MSTD…SEES and GQASPDRSKVSKQQNGASGHRPVT. Residues 11-21 are compositionally biased toward low complexity; that stretch reads EAGSSSGLLSS. A DNA-binding region (zn(2)-C6 fungal-type) is located at residues 92-122; the sequence is CTHCRQHKIKCNASENFPSSCSRCERMGLQC. The span at 206–218 shows a compositional bias: low complexity; that stretch reads SSVKSSVNTPSGS. 3 disordered regions span residues 206–227, 738–759, and 927–968; these read SSVKSSVNTPSGSYSASAVDVS, EKNRKEQPVHTAATGSQDTEKR, and ASGN…QPAP.

It is found in the nucleus. Functionally, putative transcription factor. The sequence is that of Putative transcription factor SEF1 (SEF1) from Eremothecium gossypii (strain ATCC 10895 / CBS 109.51 / FGSC 9923 / NRRL Y-1056) (Yeast).